Consider the following 337-residue polypeptide: Glyceraldehyde-3-phosphate dehydrogenase, cytosolic (337 aa).

The binding to NAD stretch occupies residues 1–151 (MAKVKVGING…YKSDLNIVSN (151 aa)). Residues 13–14 (RI), Asp-35, and Arg-82 contribute to the NAD(+) site. The segment at 152–337 (ASCTTNCLAP…DLIMHISKCQ (186 aa)) is catalytic. D-glyceraldehyde 3-phosphate contacts are provided by residues 153 to 155 (SCT), Thr-184, 213 to 214 (TG), and Arg-236. Cys-154 functions as the Nucleophile in the catalytic mechanism. Asn-318 serves as a coordination point for NAD(+).

Belongs to the glyceraldehyde-3-phosphate dehydrogenase family. In terms of assembly, homotetramer.

Its subcellular location is the cytoplasm. It carries out the reaction D-glyceraldehyde 3-phosphate + phosphate + NAD(+) = (2R)-3-phospho-glyceroyl phosphate + NADH + H(+). It functions in the pathway carbohydrate degradation; glycolysis; pyruvate from D-glyceraldehyde 3-phosphate: step 1/5. Key enzyme in glycolysis that catalyzes the first step of the pathway by converting D-glyceraldehyde 3-phosphate (G3P) into 3-phospho-D-glyceroyl phosphate. Essential for the maintenance of cellular ATP levels and carbohydrate metabolism. The polypeptide is Glyceraldehyde-3-phosphate dehydrogenase, cytosolic (GAPC) (Mesembryanthemum crystallinum (Common ice plant)).